We begin with the raw amino-acid sequence, 454 residues long: Pup--protein ligase (454 aa).

Position 9 (Glu9) interacts with Mg(2+). Arg53 contributes to the ATP binding site. A Mg(2+)-binding site is contributed by Tyr55. Asp57 functions as the Proton acceptor in the catalytic mechanism. Glu63 lines the Mg(2+) pocket. 2 residues coordinate ATP: Thr66 and Trp420.

This sequence belongs to the Pup ligase/Pup deamidase family. Pup-conjugating enzyme subfamily.

The catalysed reaction is ATP + [prokaryotic ubiquitin-like protein]-L-glutamate + [protein]-L-lysine = ADP + phosphate + N(6)-([prokaryotic ubiquitin-like protein]-gamma-L-glutamyl)-[protein]-L-lysine.. The protein operates within protein degradation; proteasomal Pup-dependent pathway. It participates in protein modification; protein pupylation. In terms of biological role, catalyzes the covalent attachment of the prokaryotic ubiquitin-like protein modifier Pup to the proteasomal substrate proteins, thereby targeting them for proteasomal degradation. This tagging system is termed pupylation. The ligation reaction involves the side-chain carboxylate of the C-terminal glutamate of Pup and the side-chain amino group of a substrate lysine. This Pseudarthrobacter chlorophenolicus (strain ATCC 700700 / DSM 12829 / CIP 107037 / JCM 12360 / KCTC 9906 / NCIMB 13794 / A6) (Arthrobacter chlorophenolicus) protein is Pup--protein ligase.